The primary structure comprises 230 residues: MPLSAQQLAAQKNLSYVLAEKLAQRILKGEYEPGTILPGEIELGEQFGVSRTAVREAVKTLTAKGMVLPRPRIGTRVMPQSNWNFLDQELLTWWMTEENFHQVIDHFLVMRICLEPQACLLAATVGTAEQKAHLNTLMAEMAALKENFRRERWIEVDMAWHEHIYEMSANPFLTSFASLFHSVYHTYFTSITSDTVIKLDLHQAIVDAIIQSDGDAAFKACQALLRSPDK.

In terms of domain architecture, HTH gntR-type spans 12 to 80 (KNLSYVLAEK…PRIGTRVMPQ (69 aa)). Residues 40 to 59 (EIELGEQFGVSRTAVREAVK) constitute a DNA-binding region (H-T-H motif).

This is an uncharacterized protein from Escherichia coli (strain K12).